A 556-amino-acid polypeptide reads, in one-letter code: Arginine--tRNA ligase (556 aa).

Positions 129–139 match the 'HIGH' region motif; it reads ANPTGPLHVGH.

Belongs to the class-I aminoacyl-tRNA synthetase family. As to quaternary structure, monomer.

It is found in the cytoplasm. The enzyme catalyses tRNA(Arg) + L-arginine + ATP = L-arginyl-tRNA(Arg) + AMP + diphosphate. The protein is Arginine--tRNA ligase of Desulfosudis oleivorans (strain DSM 6200 / JCM 39069 / Hxd3) (Desulfococcus oleovorans).